The chain runs to 318 residues: Ornithine carbamoyltransferase (318 aa).

Residues 63 to 66, Gln-90, Arg-114, and 141 to 144 contribute to the carbamoyl phosphate site; these read STRT and HPCQ. Residues Asn-172, Asp-235, and 239-240 contribute to the L-ornithine site; that span reads SM. Residues 275-276 and Arg-303 each bind carbamoyl phosphate; that span reads CL.

The protein belongs to the aspartate/ornithine carbamoyltransferase superfamily. OTCase family.

The protein localises to the cytoplasm. It carries out the reaction carbamoyl phosphate + L-ornithine = L-citrulline + phosphate + H(+). Its pathway is amino-acid biosynthesis; L-arginine biosynthesis; L-arginine from L-ornithine and carbamoyl phosphate: step 1/3. Reversibly catalyzes the transfer of the carbamoyl group from carbamoyl phosphate (CP) to the N(epsilon) atom of ornithine (ORN) to produce L-citrulline. The protein is Ornithine carbamoyltransferase of Prochlorococcus marinus (strain SARG / CCMP1375 / SS120).